The primary structure comprises 64 residues: Small hydrophobic protein (64 aa).

Over 1-20 (MENTSITIEFSSKFWPYFTL) the chain is Intravirion. The interval 6-15 (ITIEFSSKFW) is interaction with host BCAP31. The chain crosses the membrane as a helical; Signal-anchor for type II membrane protein span at residues 21–44 (IHMITTIISLLIIISIMIAILNKL). Residues 38–43 (IAILNK) are interaction with small-molecule inhibitor. The Virion surface portion of the chain corresponds to 45–64 (CEYNVFHNKTFELPRARVNT). A glycan (N-linked (GlcNAc...) asparagine; by host) is linked at asparagine 52.

Belongs to the orthopneumovirus small hydrophobic protein family. As to quaternary structure, homopentamer forming a funnel-like pore. Interacts with glycoprotein G; this interaction occurs on the surface of virion particles and infected cells. Interacts with host BCAP31 (via C-terminus); this interaction is direct. Four species of SH have been detected in infected cell cytoplasm: a 7.5 kDa non-glycosylated form (SH0), a 13-15 kDa form that contains one or two N-linked carbohydrate side chains of the high-mannose type (SHg), a 21-30 kDa polylactosaminoglycan-modified form of the protein (SHp), and the isoform generated by alternative translational initiation. Of these different forms, SH0 is by far the most abundant protein detected during virus infection. Post-translationally, tyrosine phosphorylated.

The protein resides in the virion membrane. It is found in the host cell membrane. It localises to the host Golgi apparatus membrane. Its subcellular location is the host endoplasmic reticulum membrane. Channel activity is inhibited by copper. Also inhibited by small-molecule pyronin B. In terms of biological role, viroporin that forms a homopentameric ion channel displaying low ion selectivity. May play a role in virus morphogenesis and pathogenicity at various stages of the viral life cycle. Accumulates at the membrane of the Golgi apparatus in infected cells and may facilitate virus release by modifying the secretory pathway. May enhance host membrane permeability and disrupt cellular ion homeostasis, which can be sensed as damage-associated molecular patterns/danger signals, triggering NLRP3 inflammasome activation and inflammatory immune response. Also inhibits host TNFA-mediated signaling pathway and may delay apoptosis, allowing time for the virus to replicate. This Homo sapiens (Human) protein is Small hydrophobic protein.